The primary structure comprises 668 residues: UvrABC system protein B (668 aa).

The Helicase ATP-binding domain maps to 25 to 176 (THLQSGHSRQ…DQRQLLRNLA (152 aa)). 38 to 45 (GATGTGKT) contacts ATP. The Beta-hairpin signature appears at 91-114 (YYDYYQPEAYIPVTDTFIEKTASI). The Helicase C-terminal domain occupies 429-591 (QVDDLLAEIQ…ITPQPVKKGS (163 aa)). The region spanning 626-661 (PELITQLEAQMKEAAKNLEFEEAAKYRDRIKNLRSK) is the UVR domain.

The protein belongs to the UvrB family. Forms a heterotetramer with UvrA during the search for lesions. Interacts with UvrC in an incision complex.

Its subcellular location is the cytoplasm. Functionally, the UvrABC repair system catalyzes the recognition and processing of DNA lesions. A damage recognition complex composed of 2 UvrA and 2 UvrB subunits scans DNA for abnormalities. Upon binding of the UvrA(2)B(2) complex to a putative damaged site, the DNA wraps around one UvrB monomer. DNA wrap is dependent on ATP binding by UvrB and probably causes local melting of the DNA helix, facilitating insertion of UvrB beta-hairpin between the DNA strands. Then UvrB probes one DNA strand for the presence of a lesion. If a lesion is found the UvrA subunits dissociate and the UvrB-DNA preincision complex is formed. This complex is subsequently bound by UvrC and the second UvrB is released. If no lesion is found, the DNA wraps around the other UvrB subunit that will check the other stand for damage. This Acaryochloris marina (strain MBIC 11017) protein is UvrABC system protein B.